Reading from the N-terminus, the 470-residue chain is L-fuculokinase (470 aa).

This sequence belongs to the FGGY kinase family. A divalent metal cation is required as a cofactor.

It carries out the reaction L-fuculose + ATP = L-fuculose 1-phosphate + ADP + H(+). It participates in carbohydrate degradation; L-fucose degradation; L-lactaldehyde and glycerone phosphate from L-fucose: step 2/3. Catalyzes the phosphorylation of L-fuculose. The protein is L-fuculokinase of Haemophilus influenzae (strain ATCC 51907 / DSM 11121 / KW20 / Rd).